We begin with the raw amino-acid sequence, 322 residues long: Phosphatidylserine decarboxylase proenzyme (322 aa).

Active-site charge relay system; for autoendoproteolytic cleavage activity residues include aspartate 90, histidine 147, and serine 254. Catalysis depends on serine 254, which acts as the Schiff-base intermediate with substrate; via pyruvic acid; for decarboxylase activity. Pyruvic acid (Ser); by autocatalysis is present on serine 254. The disordered stretch occupies residues 294–322 (EAEPAPLPEEEINAEHDASPLVDDKKDES). Basic and acidic residues predominate over residues 306 to 322 (NAEHDASPLVDDKKDES).

This sequence belongs to the phosphatidylserine decarboxylase family. PSD-B subfamily. Prokaryotic type I sub-subfamily. Heterodimer of a large membrane-associated beta subunit and a small pyruvoyl-containing alpha subunit. Pyruvate serves as cofactor. Is synthesized initially as an inactive proenzyme. Formation of the active enzyme involves a self-maturation process in which the active site pyruvoyl group is generated from an internal serine residue via an autocatalytic post-translational modification. Two non-identical subunits are generated from the proenzyme in this reaction, and the pyruvate is formed at the N-terminus of the alpha chain, which is derived from the carboxyl end of the proenzyme. The autoendoproteolytic cleavage occurs by a canonical serine protease mechanism, in which the side chain hydroxyl group of the serine supplies its oxygen atom to form the C-terminus of the beta chain, while the remainder of the serine residue undergoes an oxidative deamination to produce ammonia and the pyruvoyl prosthetic group on the alpha chain. During this reaction, the Ser that is part of the protease active site of the proenzyme becomes the pyruvoyl prosthetic group, which constitutes an essential element of the active site of the mature decarboxylase.

The protein localises to the cell membrane. It catalyses the reaction a 1,2-diacyl-sn-glycero-3-phospho-L-serine + H(+) = a 1,2-diacyl-sn-glycero-3-phosphoethanolamine + CO2. It participates in phospholipid metabolism; phosphatidylethanolamine biosynthesis; phosphatidylethanolamine from CDP-diacylglycerol: step 2/2. Its function is as follows. Catalyzes the formation of phosphatidylethanolamine (PtdEtn) from phosphatidylserine (PtdSer). The chain is Phosphatidylserine decarboxylase proenzyme from Citrobacter koseri (strain ATCC BAA-895 / CDC 4225-83 / SGSC4696).